The following is a 276-amino-acid chain: MTDTTNSIKHVISPLARQTLQDRDLTRPVAGKRPIRLLPWLQVVKIGGRVMDRGADAILPLVEELRKLLPEHRLLILTGAGVRARHVFSVGLDLGLPVGSLAPLAASEAGQNGHILAAMLASEGVSYVEHPTVADQLAIHLSATRAVVGSAFPPYHHHEFPGSRIPPHRADTGAFLLADAFGAAGLTIVENVDGIYTADPNGPDRGQARFLPETSATDLAKSEGPLPVDRALLDVMATARHIERVQVVNGLVPGRLTAALRGEHVGTLIRTGVRPA.

In terms of assembly, octamer consisting of 4 alpha and 4 beta chains.

The protein resides in the cytoplasm. Functionally, intracellular storage of molybdenum. Binds polyoxomolybdates. Can bind at least 90 molybdenum atoms per protein molecule. The sequence is that of Molybdenum storage protein subunit alpha from Azotobacter vinelandii (strain DJ / ATCC BAA-1303).